Here is a 351-residue protein sequence, read N- to C-terminus: DNA polymerase IV (351 aa).

The 182-residue stretch at 4-185 (IIHVDMDCFF…LPLEKIPGVG (182 aa)) folds into the UmuC domain. The Mg(2+) site is built by Asp8 and Asp103. Glu104 is an active-site residue.

This sequence belongs to the DNA polymerase type-Y family. In terms of assembly, monomer. The cofactor is Mg(2+).

It localises to the cytoplasm. It carries out the reaction DNA(n) + a 2'-deoxyribonucleoside 5'-triphosphate = DNA(n+1) + diphosphate. Functionally, poorly processive, error-prone DNA polymerase involved in untargeted mutagenesis. Copies undamaged DNA at stalled replication forks, which arise in vivo from mismatched or misaligned primer ends. These misaligned primers can be extended by PolIV. Exhibits no 3'-5' exonuclease (proofreading) activity. May be involved in translesional synthesis, in conjunction with the beta clamp from PolIII. This Shigella flexneri protein is DNA polymerase IV.